We begin with the raw amino-acid sequence, 278 residues long: MITRFAPSPTGPLHLGHAFAAILAHDMARAAGGRFLLRIEDIDRARAKPQWEAQLLDDLRWLGITWDGPVLRQSDRLPLYRDALERLWQRGLVYSCTCSRRDIEQAASAPQEGAPLGPDGIVYPGSCRDKGRPRPGQALPETALRLRMDLAATETGFEETGPAHRGWHEIRPETMIRAVGDVVLARREMGTSYHLSVVLDDAAQGVTHVTRGEDLFEATCIHVTLQRLLGLPVPVYHHHGLIRDDAGKRLAKRDNARALSKYRAEGASPADIRRLIGL.

L-glutamate is bound by residues 4-8 (RFAPS) and Glu-40. Residues 7 to 17 (PSPTGPLHLGH) carry the 'HIGH' region motif. Zn(2+) is bound by residues Cys-96, Cys-98, Tyr-123, and Cys-127. Tyr-193 and Arg-211 together coordinate L-glutamate. The 'KMSKS' region motif lies at 249-253 (RLAKR). Lys-252 serves as a coordination point for ATP.

This sequence belongs to the class-I aminoacyl-tRNA synthetase family. GluQ subfamily. Zn(2+) serves as cofactor.

Catalyzes the tRNA-independent activation of glutamate in presence of ATP and the subsequent transfer of glutamate onto a tRNA(Asp). Glutamate is transferred on the 2-amino-5-(4,5-dihydroxy-2-cyclopenten-1-yl) moiety of the queuosine in the wobble position of the QUC anticodon. In Rhodobacter capsulatus (strain ATCC BAA-309 / NBRC 16581 / SB1003), this protein is Glutamyl-Q tRNA(Asp) synthetase (gluQ).